The chain runs to 393 residues: Mitochondrial inner membrane magnesium transporter LPE10 (393 aa).

A mitochondrion-targeting transit peptide spans 1-45; it reads MLGLRLPVCRRAVMASPRACWRLWHSSTAAAAGMQDLSAVLQRNL. 2 helical membrane-spanning segments follow: residues 323-343 and 350-370; these read FAIGLLSLGSVMFVAALYGMN and EGNVGFALVTATGLVLMVCLF. The short motif at 340 to 343 is the YGMN element; it reads YGMN.

This sequence belongs to the CorA metal ion transporter (MIT) (TC 1.A.35) family. Forms homooligomers. Interacts with MRS2.

Its subcellular location is the mitochondrion inner membrane. Functionally, mitochondrial inner membrane magnesium transporter required for mitochondrial magnesium homeostasis. Modulates the conductance of the MRS2 channel. Involved in the splicing of mRNA group II introns in mitochondria by affecting mitochondrial magnesium concentrations, which are critical for group II intron splicing. The protein is Mitochondrial inner membrane magnesium transporter LPE10 (LPE10) of Eremothecium gossypii (strain ATCC 10895 / CBS 109.51 / FGSC 9923 / NRRL Y-1056) (Yeast).